Consider the following 108-residue polypeptide: Small ribosomal subunit protein bS16 (108 aa).

The tract at residues 82–108 (ESKFSKNTQTENKKPVSKKTTKKSKDN) is disordered. Residues 96–108 (PVSKKTTKKSKDN) show a composition bias toward basic residues.

Belongs to the bacterial ribosomal protein bS16 family.

In Mycoplasma capricolum subsp. capricolum (strain California kid / ATCC 27343 / NCTC 10154), this protein is Small ribosomal subunit protein bS16.